We begin with the raw amino-acid sequence, 494 residues long: 3-octaprenyl-4-hydroxybenzoate carboxy-lyase (494 aa).

A Mn(2+)-binding site is contributed by Asn172. Residues 175-177, 189-191, and 194-195 contribute to the prenylated FMN site; these read IYR, RWL, and RG. Residue Glu238 coordinates Mn(2+). The active-site Proton donor is the Asp294.

The protein belongs to the UbiD family. As to quaternary structure, homohexamer. The cofactor is prenylated FMN. Mn(2+) serves as cofactor.

It is found in the cell membrane. It catalyses the reaction a 4-hydroxy-3-(all-trans-polyprenyl)benzoate + H(+) = a 2-(all-trans-polyprenyl)phenol + CO2. The protein operates within cofactor biosynthesis; ubiquinone biosynthesis. In terms of biological role, catalyzes the decarboxylation of 3-octaprenyl-4-hydroxy benzoate to 2-octaprenylphenol, an intermediate step in ubiquinone biosynthesis. This chain is 3-octaprenyl-4-hydroxybenzoate carboxy-lyase, found in Herminiimonas arsenicoxydans.